The sequence spans 289 residues: tRNA pseudouridine synthase B (289 aa).

Catalysis depends on Asp38, which acts as the Nucleophile.

It belongs to the pseudouridine synthase TruB family. Type 1 subfamily.

The catalysed reaction is uridine(55) in tRNA = pseudouridine(55) in tRNA. Responsible for synthesis of pseudouridine from uracil-55 in the psi GC loop of transfer RNAs. The polypeptide is tRNA pseudouridine synthase B (Clostridium kluyveri (strain ATCC 8527 / DSM 555 / NBRC 12016 / NCIMB 10680 / K1)).